The following is a 132-amino-acid chain: MSKRKKYVRPMTATWWQKLDFYKAYMLREATSVFAVWFCIVLLYGVLCFASNPMPGLGILSFIEFLRNPIVVFLNIITLIATLYHTVTYFLMTPKVMNIIVKNERLPHTVVRNALWAVTALVSVIALVLVYI.

Transmembrane regions (helical) follow at residues Ala30–Ala50, Ile70–Phe90, and Val110–Val130.

This sequence belongs to the FrdC family. Part of an enzyme complex containing four subunits: a flavoprotein (FrdA), an iron-sulfur protein (FrdB), and two hydrophobic anchor proteins (FrdC and FrdD).

The protein localises to the cell inner membrane. In terms of biological role, anchors the catalytic components of the fumarate reductase complex to the cell membrane, binds quinones. This chain is Fumarate reductase subunit C, found in Haemophilus influenzae (strain ATCC 51907 / DSM 11121 / KW20 / Rd).